We begin with the raw amino-acid sequence, 343 residues long: Cytoplasmic tRNA 2-thiolation protein 1 (343 aa).

Belongs to the TtcA family. CTU1/NCS6/ATPBD3 subfamily.

It localises to the cytoplasm. It participates in tRNA modification; 5-methoxycarbonylmethyl-2-thiouridine-tRNA biosynthesis. Plays a central role in 2-thiolation of mcm(5)S(2)U at tRNA wobble positions of tRNA(Lys), tRNA(Glu) and tRNA(Gln). Directly binds tRNAs and probably acts by catalyzing adenylation of tRNAs, an intermediate required for 2-thiolation. It is unclear whether it acts as a sulfurtransferase that transfers sulfur from thiocarboxylated URM1 onto the uridine of tRNAs at wobble position. This Drosophila mojavensis (Fruit fly) protein is Cytoplasmic tRNA 2-thiolation protein 1.